Consider the following 62-residue polypeptide: Photosystem II reaction center protein Z (62 aa).

The next 2 helical transmembrane spans lie at 8–28 (AVFA…VALA) and 41–61 (FSGV…NSFI).

This sequence belongs to the PsbZ family. PSII is composed of 1 copy each of membrane proteins PsbA, PsbB, PsbC, PsbD, PsbE, PsbF, PsbH, PsbI, PsbJ, PsbK, PsbL, PsbM, PsbT, PsbY, PsbZ, Psb30/Ycf12, at least 3 peripheral proteins of the oxygen-evolving complex and a large number of cofactors. It forms dimeric complexes.

It localises to the plastid. Its subcellular location is the chloroplast thylakoid membrane. Functionally, may control the interaction of photosystem II (PSII) cores with the light-harvesting antenna, regulates electron flow through the 2 photosystem reaction centers. PSII is a light-driven water plastoquinone oxidoreductase, using light energy to abstract electrons from H(2)O, generating a proton gradient subsequently used for ATP formation. The chain is Photosystem II reaction center protein Z from Pinus thunbergii (Japanese black pine).